Here is a 110-residue protein sequence, read N- to C-terminus: PTS system oligo-beta-mannoside-specific EIIA component (110 aa).

In terms of domain architecture, PTS EIIA type-3 spans 9–107 (LTDEQISFQL…VKEMLDLFKT (99 aa)). The active-site Tele-phosphohistidine intermediate is the His83. His83 bears the Phosphohistidine; by HPr mark.

The protein resides in the cytoplasm. In terms of biological role, the phosphoenolpyruvate-dependent sugar phosphotransferase system (sugar PTS), a major carbohydrate active transport system, catalyzes the phosphorylation of incoming sugar substrates concomitantly with their translocation across the cell membrane. The enzyme II GmuABC PTS system is involved in the transport of oligo-glucomannans such as cellobiose or mannobiose. The sequence is that of PTS system oligo-beta-mannoside-specific EIIA component from Bacillus subtilis (strain 168).